Here is a 362-residue protein sequence, read N- to C-terminus: Phosphoserine aminotransferase (362 aa).

L-glutamate contacts are provided by S9 and R42. Residues 76 to 77 (GR), W102, T153, D174, and Q197 contribute to the pyridoxal 5'-phosphate site. The residue at position 198 (K198) is an N6-(pyridoxal phosphate)lysine. 239–240 (NT) is a pyridoxal 5'-phosphate binding site.

Belongs to the class-V pyridoxal-phosphate-dependent aminotransferase family. SerC subfamily. In terms of assembly, homodimer. Pyridoxal 5'-phosphate is required as a cofactor.

The protein resides in the cytoplasm. It catalyses the reaction O-phospho-L-serine + 2-oxoglutarate = 3-phosphooxypyruvate + L-glutamate. It carries out the reaction 4-(phosphooxy)-L-threonine + 2-oxoglutarate = (R)-3-hydroxy-2-oxo-4-phosphooxybutanoate + L-glutamate. Its pathway is amino-acid biosynthesis; L-serine biosynthesis; L-serine from 3-phospho-D-glycerate: step 2/3. The protein operates within cofactor biosynthesis; pyridoxine 5'-phosphate biosynthesis; pyridoxine 5'-phosphate from D-erythrose 4-phosphate: step 3/5. Its function is as follows. Catalyzes the reversible conversion of 3-phosphohydroxypyruvate to phosphoserine and of 3-hydroxy-2-oxo-4-phosphonooxybutanoate to phosphohydroxythreonine. The sequence is that of Phosphoserine aminotransferase from Shigella boydii serotype 4 (strain Sb227).